Reading from the N-terminus, the 191-residue chain is UPF0149 protein VV1_1551 (191 aa).

It belongs to the UPF0149 family.

This Vibrio vulnificus (strain CMCP6) protein is UPF0149 protein VV1_1551.